Here is a 472-residue protein sequence, read N- to C-terminus: H(+)/Cl(-) exchange transporter ClcA (472 aa).

At 1–32 the chain is on the cytoplasmic side; that stretch reads MKAETPSFEAHQFVRVRRGDAVRRLIQRDKTP. A helical transmembrane segment spans residues 33-69; sequence LAVLFMAAVVGTLAGLVGVAFEKSVNWVQNQRIGALA. Over 70-76 the chain is Periplasmic; that stretch reads QVADHWY. The chain crosses the membrane as a helical span at residues 77–100; that stretch reads LVWPLAFILSALLAMVGYFLVRRF. The short motif at 106–110 is the Selectivity filter part_1 element; it reads GSGIP. Ser107 contributes to the chloride binding site. The segment at residues 109–116 is an intramembrane region (helical); it reads IPEIEGAL. The Cytoplasmic portion of the chain corresponds to 117-123; it reads EELRPVR. The next 2 helical transmembrane spans lie at 124 to 141 and 148 to 166; these read WWRV…TLGA and EGPM…LDVF. Residues 146–150 carry the Selectivity filter part_2 motif; that stretch reads GREGP. Topologically, residues 167–176 are cytoplasmic; it reads RMRSPEARHT. 2 intramembrane regions (helical) span residues 177–189 and 193–201; these read LLAT…LSAA and PLAGILFII. Residues 202-214 are Cytoplasmic-facing; that stretch reads EEMRPQFRYNLIS. A helical membrane pass occupies residues 215 to 232; it reads IKAVFTGVIMSSIVFRIF. The Periplasmic portion of the chain corresponds to 233-252; the sequence is NGEAAIIEVGKLSNAPVNTL. Residues 253 to 281 form a helical membrane-spanning segment; that stretch reads WLYLVLGMLFGCFGPLFNFLVLRTQDLFQ. Topologically, residues 282 to 287 are cytoplasmic; it reads RIHGGN. Residues 288 to 309 form a helical membrane-spanning segment; sequence IKKWVLIGGLIGGLCGLLGLMQ. Topologically, residues 310 to 329 are periplasmic; the sequence is PSAVGGGFNLIPIAAAGNFS. A run of 2 helical transmembrane segments spans residues 330–349 and 355–376; these read VGLL…ICFS and GIFA…MAAI. Residues 355-359 carry the Selectivity filter part_3 motif; that stretch reads GIFAP. Ile356 and Phe357 together coordinate chloride. Topologically, residues 377 to 386 are periplasmic; that stretch reads PLFPAYHLDA. Residues 387–401 constitute an intramembrane region (helical); sequence GTFAIAGMGALLAAS. An intramembrane region (note=Loop between two helices) is located at residues 402 to 404; the sequence is VRA. The helical intramembrane region spans 405 to 416; it reads PLTGIVLVLEMT. The segment at residues 417-421 is an intramembrane region (note=Loop between two helices); that stretch reads DNYQL. The helical transmembrane segment at 422-438 threads the bilayer; that stretch reads ILPMIITCLGATLLAQF. The Cytoplasmic portion of the chain corresponds to 439 to 472; the sequence is LGGKPLYSTILQRTLAKQEAEQAAKAQQAPRENT. Tyr445 contributes to the chloride binding site.

This sequence belongs to the chloride channel (TC 2.A.49) family. ClcA subfamily. Homodimer.

Its subcellular location is the cell inner membrane. It carries out the reaction 2 chloride(in) + H(+)(out) = 2 chloride(out) + H(+)(in). In terms of biological role, proton-coupled chloride transporter. Functions as antiport system and exchanges two chloride ions for 1 proton. Probably acts as an electrical shunt for an outwardly-directed proton pump that is linked to amino acid decarboxylation, as part of the extreme acid resistance (XAR) response. The sequence is that of H(+)/Cl(-) exchange transporter ClcA from Klebsiella pneumoniae subsp. pneumoniae (strain ATCC 700721 / MGH 78578).